Consider the following 369-residue polypeptide: 2-aminoethylphosphonate--pyruvate transaminase (369 aa).

Lys-193 is subject to N6-(pyridoxal phosphate)lysine.

This sequence belongs to the class-V pyridoxal-phosphate-dependent aminotransferase family. PhnW subfamily. In terms of assembly, homodimer. It depends on pyridoxal 5'-phosphate as a cofactor.

It carries out the reaction (2-aminoethyl)phosphonate + pyruvate = phosphonoacetaldehyde + L-alanine. In terms of biological role, involved in phosphonate degradation. The sequence is that of 2-aminoethylphosphonate--pyruvate transaminase from Burkholderia pseudomallei (strain K96243).